The chain runs to 257 residues: NAD-capped RNA hydrolase NudC (257 aa).

Substrate is bound at residue arginine 69. The Zn(2+) site is built by cysteine 98 and cysteine 101. Glutamate 111 provides a ligand contact to substrate. Zn(2+)-binding residues include cysteine 116 and cysteine 119. Tyrosine 124 contributes to the substrate binding site. One can recognise a Nudix hydrolase domain in the interval 125–248 (PQIAPCIIVA…TVARRLIEDT (124 aa)). Alanine 158, glutamate 174, and glutamate 178 together coordinate a divalent metal cation. The short motif at 159–180 (GFVEVGETLEQAVAREVMEESG) is the Nudix box element. A substrate-binding site is contributed by 192-199 (QPWPFPQS). An a divalent metal cation-binding site is contributed by glutamate 219. Alanine 241 is a substrate binding site.

This sequence belongs to the Nudix hydrolase family. NudC subfamily. Homodimer. The cofactor is Mg(2+). It depends on Mn(2+) as a cofactor. Requires Zn(2+) as cofactor.

It catalyses the reaction a 5'-end NAD(+)-phospho-ribonucleoside in mRNA + H2O = a 5'-end phospho-adenosine-phospho-ribonucleoside in mRNA + beta-nicotinamide D-ribonucleotide + 2 H(+). It carries out the reaction NAD(+) + H2O = beta-nicotinamide D-ribonucleotide + AMP + 2 H(+). The catalysed reaction is NADH + H2O = reduced beta-nicotinamide D-ribonucleotide + AMP + 2 H(+). In terms of biological role, mRNA decapping enzyme that specifically removes the nicotinamide adenine dinucleotide (NAD) cap from a subset of mRNAs by hydrolyzing the diphosphate linkage to produce nicotinamide mononucleotide (NMN) and 5' monophosphate mRNA. The NAD-cap is present at the 5'-end of some mRNAs and stabilizes RNA against 5'-processing. Has preference for mRNAs with a 5'-end purine. Catalyzes the hydrolysis of a broad range of dinucleotide pyrophosphates. This chain is NAD-capped RNA hydrolase NudC, found in Citrobacter koseri (strain ATCC BAA-895 / CDC 4225-83 / SGSC4696).